Here is a 285-residue protein sequence, read N- to C-terminus: MSGRTYRVTGINLKGIPLGEADRIVTILTREQGLIRAVAKGSRKQPSKLGGRMEPFVINDLLMVRGRWSAQTETSQRLQRIVQAETLQTFPRLSRSLAHLTAAQYLAEVALLLALPDQAQEELFVVLVEHLERIERAASEQAVLPLLTHGLYHLLALAGFAPQVQACYFCQGGLVGSVFFSPQWGGLICDPCRVAQRPSPIAWVSASALRALGSLPSSTLPLPEDSLPLAAWLEAERLLRRVLEHHTDREIRSAELLASCYAVPTANGQGSPAFPEGHPEKWASA.

The protein belongs to the RecO family.

Functionally, involved in DNA repair and RecF pathway recombination. In Synechococcus sp. (strain JA-2-3B'a(2-13)) (Cyanobacteria bacterium Yellowstone B-Prime), this protein is DNA repair protein RecO.